Here is a 935-residue protein sequence, read N- to C-terminus: Isoleucine--tRNA ligase (935 aa).

The 'HIGH' region motif lies at 58–68; that stretch reads PYANGSIHVGH. Glu558 provides a ligand contact to L-isoleucyl-5'-AMP. The 'KMSKS' region signature appears at 599-603; the sequence is KMSKS. Lys602 provides a ligand contact to ATP. Cys897, Cys900, Cys917, and Cys920 together coordinate Zn(2+).

Belongs to the class-I aminoacyl-tRNA synthetase family. IleS type 1 subfamily. Monomer. Requires Zn(2+) as cofactor.

Its subcellular location is the cytoplasm. It carries out the reaction tRNA(Ile) + L-isoleucine + ATP = L-isoleucyl-tRNA(Ile) + AMP + diphosphate. Functionally, catalyzes the attachment of isoleucine to tRNA(Ile). As IleRS can inadvertently accommodate and process structurally similar amino acids such as valine, to avoid such errors it has two additional distinct tRNA(Ile)-dependent editing activities. One activity is designated as 'pretransfer' editing and involves the hydrolysis of activated Val-AMP. The other activity is designated 'posttransfer' editing and involves deacylation of mischarged Val-tRNA(Ile). This is Isoleucine--tRNA ligase from Francisella tularensis subsp. tularensis (strain SCHU S4 / Schu 4).